A 580-amino-acid polypeptide reads, in one-letter code: MSLDQAIPEALQALRTRFGAAVRAEQATGEAFPVLWLDASVWEAAHRFLREEIAAPFPLLADLWAIDESLRQHRTGQPASRITLCSHLVSLVRNADLRLKLATDGRAPSIAGVYANADWYEREAHDMFGLDFGRETRRILMPPTWEGHPLLKTHYARATEKPPFVLTDRLFEAEERATITDPDLLGLPKLRDGEELMVLNFGPHHPSTHGVFRILLGLDGEEVVWAWPDIGYHHRGAEKMAERQTWHGFIPYCDRIDYLGGVISELPYLLAVERLCGIAVPPRAQMIRVMLCEFYRIMNHLLFYGTMAQDVGAMSPVFYMFTDREKGHEILNAITGARMHPAFFRIGGVAMDLPTGWDAMVRGFLDWMPARLDEYERMVLRSELFRARTVGVGAYDTDMALTWGTTGPGLRATGCDWDLRKLRPYSGYEQFDFEVPLGQRGDIFDRTRVRADEMRESLKIIRQCLGNMPEGPVKADHPLTTPPPRGAMQKDIETLIAHFLQSSWGTVVPAGEATGQIEGHRGLTQYSVVSDGGTQSYRTRIRTPSFAHLQMIPKIVPGMTVADLVAHIASIDFVMSDVDR.

The NADH dehydrogenase I subunit C stretch occupies residues 1–171; sequence MSLDQAIPEA…PPFVLTDRLF (171 aa). The segment at 195 to 580 is NADH dehydrogenase I subunit D; that stretch reads ELMVLNFGPH…IDFVMSDVDR (386 aa).

It in the N-terminal section; belongs to the complex I 30 kDa subunit family. In the C-terminal section; belongs to the complex I 49 kDa subunit family. In terms of assembly, NDH-1 is composed of 13 different subunits. Subunits NuoB, CD, E, F, and G constitute the peripheral sector of the complex.

It is found in the cell inner membrane. The enzyme catalyses a quinone + NADH + 5 H(+)(in) = a quinol + NAD(+) + 4 H(+)(out). Its function is as follows. NDH-1 shuttles electrons from NADH, via FMN and iron-sulfur (Fe-S) centers, to quinones in the respiratory chain. The immediate electron acceptor for the enzyme in this species is believed to be ubiquinone. Couples the redox reaction to proton translocation (for every two electrons transferred, four hydrogen ions are translocated across the cytoplasmic membrane), and thus conserves the redox energy in a proton gradient. The polypeptide is NADH-quinone oxidoreductase subunit C/D (Cereibacter sphaeroides (strain ATCC 17029 / ATH 2.4.9) (Rhodobacter sphaeroides)).